A 310-amino-acid chain; its full sequence is Protein-L-isoaspartate O-methyltransferase (310 aa).

A disordered region spans residues 1 to 41 (MSGERAKRFPLALEDLKRAPRKSEGRPGERQTAGAVPKAAD). Positions 14–29 (EDLKRAPRKSEGRPGE) are enriched in basic and acidic residues. Ser-157 is an active-site residue.

This sequence belongs to the methyltransferase superfamily. L-isoaspartyl/D-aspartyl protein methyltransferase family.

The protein localises to the cytoplasm. It catalyses the reaction [protein]-L-isoaspartate + S-adenosyl-L-methionine = [protein]-L-isoaspartate alpha-methyl ester + S-adenosyl-L-homocysteine. Catalyzes the methyl esterification of L-isoaspartyl residues in peptides and proteins that result from spontaneous decomposition of normal L-aspartyl and L-asparaginyl residues. It plays a role in the repair and/or degradation of damaged proteins. The protein is Protein-L-isoaspartate O-methyltransferase of Burkholderia cenocepacia (strain HI2424).